Here is a 360-residue protein sequence, read N- to C-terminus: Phospho-N-acetylmuramoyl-pentapeptide-transferase (360 aa).

A run of 10 helical transmembrane segments spans residues 21-41 (YITVRAILALLTALLVSLWIG), 73-93 (TMGGVMILFAITVSTLLWANL), 94-114 (ANPYVWFSLFVLLGYGAIGFV), 132-152 (WKYFWLSVIALVAAFGMYAIG), 168-188 (IMPQLGLFYIILTYFVIVGTS), 199-219 (GLAIMPTVLVAGAFALIAWAT), 235-255 (FSAELVVFCTAIVGAGLGFLW), 263-283 (VFMGDVGSLALGGALGVVAVL), 288-308 (FLLVIMGGVFVVETLSVILQV), and 338-358 (VIVRFWIISLMLVLVGLVTLK).

Belongs to the glycosyltransferase 4 family. MraY subfamily. Mg(2+) is required as a cofactor.

The protein localises to the cell inner membrane. It carries out the reaction UDP-N-acetyl-alpha-D-muramoyl-L-alanyl-gamma-D-glutamyl-meso-2,6-diaminopimeloyl-D-alanyl-D-alanine + di-trans,octa-cis-undecaprenyl phosphate = di-trans,octa-cis-undecaprenyl diphospho-N-acetyl-alpha-D-muramoyl-L-alanyl-D-glutamyl-meso-2,6-diaminopimeloyl-D-alanyl-D-alanine + UMP. It functions in the pathway cell wall biogenesis; peptidoglycan biosynthesis. Its function is as follows. Catalyzes the initial step of the lipid cycle reactions in the biosynthesis of the cell wall peptidoglycan: transfers peptidoglycan precursor phospho-MurNAc-pentapeptide from UDP-MurNAc-pentapeptide onto the lipid carrier undecaprenyl phosphate, yielding undecaprenyl-pyrophosphoryl-MurNAc-pentapeptide, known as lipid I. This is Phospho-N-acetylmuramoyl-pentapeptide-transferase from Pasteurella multocida (strain Pm70).